Reading from the N-terminus, the 428-residue chain is Histidine--tRNA ligase (428 aa).

It belongs to the class-II aminoacyl-tRNA synthetase family. As to quaternary structure, homodimer.

The protein localises to the cytoplasm. It carries out the reaction tRNA(His) + L-histidine + ATP = L-histidyl-tRNA(His) + AMP + diphosphate + H(+). This Staphylococcus carnosus (strain TM300) protein is Histidine--tRNA ligase.